The primary structure comprises 344 residues: Heat-inducible transcription repressor HrcA (344 aa).

The protein belongs to the HrcA family.

In terms of biological role, negative regulator of class I heat shock genes (grpE-dnaK-dnaJ and groELS operons). Prevents heat-shock induction of these operons. The protein is Heat-inducible transcription repressor HrcA of Streptococcus equi subsp. zooepidemicus (strain MGCS10565).